The following is a 336-amino-acid chain: Thiamine thiazole synthase (336 aa).

Substrate contacts are provided by residues A89, 110–111, G118, and C183; that span reads ES. C219 is subject to 2,3-didehydroalanine (Cys). Substrate contacts are provided by residues D221, H236, M288, and 298-300; that span reads RMG.

This sequence belongs to the THI4 family. As to quaternary structure, homooctamer. It depends on Fe cation as a cofactor. In terms of processing, during the catalytic reaction, a sulfide is transferred from Cys-219 to a reaction intermediate, generating a dehydroalanine residue.

It localises to the cytoplasm. Its subcellular location is the nucleus. It carries out the reaction [ADP-thiazole synthase]-L-cysteine + glycine + NAD(+) = [ADP-thiazole synthase]-dehydroalanine + ADP-5-ethyl-4-methylthiazole-2-carboxylate + nicotinamide + 3 H2O + 2 H(+). Functionally, involved in biosynthesis of the thiamine precursor thiazole. Catalyzes the conversion of NAD and glycine to adenosine diphosphate 5-(2-hydroxyethyl)-4-methylthiazole-2-carboxylic acid (ADT), an adenylated thiazole intermediate. The reaction includes an iron-dependent sulfide transfer from a conserved cysteine residue of the protein to a thiazole intermediate. The enzyme can only undergo a single turnover, which suggests it is a suicide enzyme. May have additional roles in adaptation to various stress conditions and in DNA damage tolerance. In Puccinia graminis f. sp. tritici (strain CRL 75-36-700-3 / race SCCL) (Black stem rust fungus), this protein is Thiamine thiazole synthase.